Reading from the N-terminus, the 336-residue chain is Dihydroorotate dehydrogenase (quinone) (336 aa).

Residues 62-66 and T86 each bind FMN; that span reads AGLDK. K66 serves as a coordination point for substrate. 111–115 serves as a coordination point for substrate; the sequence is NRMGF. Positions 139 and 172 each coordinate FMN. Substrate is bound at residue N172. S175 functions as the Nucleophile in the catalytic mechanism. N177 is a substrate binding site. The FMN site is built by K217 and T245. 246–247 lines the substrate pocket; it reads NT. FMN-binding positions include G268, G297, and 318 to 319; that span reads YS.

It belongs to the dihydroorotate dehydrogenase family. Type 2 subfamily. In terms of assembly, monomer. FMN is required as a cofactor.

The protein localises to the cell membrane. It carries out the reaction (S)-dihydroorotate + a quinone = orotate + a quinol. It participates in pyrimidine metabolism; UMP biosynthesis via de novo pathway; orotate from (S)-dihydroorotate (quinone route): step 1/1. In terms of biological role, catalyzes the conversion of dihydroorotate to orotate with quinone as electron acceptor. The sequence is that of Dihydroorotate dehydrogenase (quinone) from Vibrio vulnificus (strain YJ016).